Here is a 405-residue protein sequence, read N- to C-terminus: NADH-quinone oxidoreductase subunit D (405 aa).

The protein belongs to the complex I 49 kDa subunit family. In terms of assembly, NDH-1 is composed of 14 different subunits. Subunits NuoB, C, D, E, F, and G constitute the peripheral sector of the complex.

It is found in the cell inner membrane. The catalysed reaction is a quinone + NADH + 5 H(+)(in) = a quinol + NAD(+) + 4 H(+)(out). Functionally, NDH-1 shuttles electrons from NADH, via FMN and iron-sulfur (Fe-S) centers, to quinones in the respiratory chain. The immediate electron acceptor for the enzyme in this species is believed to be ubiquinone. Couples the redox reaction to proton translocation (for every two electrons transferred, four hydrogen ions are translocated across the cytoplasmic membrane), and thus conserves the redox energy in a proton gradient. In Afipia carboxidovorans (strain ATCC 49405 / DSM 1227 / KCTC 32145 / OM5) (Oligotropha carboxidovorans), this protein is NADH-quinone oxidoreductase subunit D.